The following is an 827-amino-acid chain: Translation initiation factor IF-2 (827 aa).

Residues 49–205 (ALNREKEEKE…GAPDKKREWE (157 aa)) form a disordered region. 6 stretches are compositionally biased toward basic and acidic residues: residues 50-73 (LNREKEEKEKKEQEKKQVEQKAEA), 96-106 (RPREQRSDRPQ), 116-129 (PEPRDKDKGRRPGE), 137-150 (RPRDDRRRFDKERG), 157-168 (FGEKKERPPFPR), and 182-205 (EAPKGENKEPERRKGAPDKKREWE). One can recognise a tr-type G domain in the interval 326–495 (PRPPIVTVMG…LLVADLKELK (170 aa)). The segment at 335–342 (GHVDHGKT) is G1. 335 to 342 (GHVDHGKT) contacts GTP. Residues 360–364 (GITQH) are G2. The G3 stretch occupies residues 381–384 (DTPG). Residues 381 to 385 (DTPGH) and 435 to 438 (NKID) contribute to the GTP site. A G4 region spans residues 435–438 (NKID). The interval 471–473 (SAL) is G5.

Belongs to the TRAFAC class translation factor GTPase superfamily. Classic translation factor GTPase family. IF-2 subfamily.

It is found in the cytoplasm. In terms of biological role, one of the essential components for the initiation of protein synthesis. Protects formylmethionyl-tRNA from spontaneous hydrolysis and promotes its binding to the 30S ribosomal subunits. Also involved in the hydrolysis of GTP during the formation of the 70S ribosomal complex. The protein is Translation initiation factor IF-2 of Carboxydothermus hydrogenoformans (strain ATCC BAA-161 / DSM 6008 / Z-2901).